Reading from the N-terminus, the 421-residue chain is Diaminobutyrate--2-oxoglutarate transaminase (421 aa).

K262 carries the post-translational modification N6-(pyridoxal phosphate)lysine.

It belongs to the class-III pyridoxal-phosphate-dependent aminotransferase family. The cofactor is pyridoxal 5'-phosphate.

The catalysed reaction is L-2,4-diaminobutanoate + 2-oxoglutarate = L-aspartate 4-semialdehyde + L-glutamate. It participates in amine and polyamine biosynthesis; ectoine biosynthesis; L-ectoine from L-aspartate 4-semialdehyde: step 1/3. Functionally, catalyzes reversively the conversion of L-aspartate beta-semialdehyde (ASA) to L-2,4-diaminobutyrate (DABA) by transamination with L-glutamate. In Vibrio parahaemolyticus serotype O3:K6 (strain RIMD 2210633), this protein is Diaminobutyrate--2-oxoglutarate transaminase (ectB).